We begin with the raw amino-acid sequence, 86 residues long: Small ribosomal subunit protein bS20 (86 aa).

The protein belongs to the bacterial ribosomal protein bS20 family.

Functionally, binds directly to 16S ribosomal RNA. This Bifidobacterium longum subsp. infantis (strain ATCC 15697 / DSM 20088 / JCM 1222 / NCTC 11817 / S12) protein is Small ribosomal subunit protein bS20.